Consider the following 206-residue polypeptide: Protein SYM1 (206 aa).

3 consecutive transmembrane segments (helical) span residues 16–36 (PLITNIITTGFLFGSGDYLAQ), 103–123 (LVFAPFIGIPLYYSVMSVLEF), and 155–175 (LFNFALIPVQFRLLVVNIFSI).

Belongs to the peroxisomal membrane protein PXMP2/4 family.

The protein resides in the mitochondrion inner membrane. Functionally, may be involved in cellular response to stress. Required to maintain mitochondrial DNA (mtDNA) integrity and stability. The protein is Protein SYM1 (SYM1) of Debaryomyces hansenii (strain ATCC 36239 / CBS 767 / BCRC 21394 / JCM 1990 / NBRC 0083 / IGC 2968) (Yeast).